We begin with the raw amino-acid sequence, 363 residues long: UDP-N-acetylglucosamine--N-acetylmuramyl-(pentapeptide) pyrophosphoryl-undecaprenol N-acetylglucosamine transferase (363 aa).

Residues 10–12, N124, S195, I250, and Q295 each bind UDP-N-acetyl-alpha-D-glucosamine; that span reads TGG.

This sequence belongs to the glycosyltransferase 28 family. MurG subfamily.

It localises to the cell membrane. The enzyme catalyses di-trans,octa-cis-undecaprenyl diphospho-N-acetyl-alpha-D-muramoyl-L-alanyl-D-glutamyl-meso-2,6-diaminopimeloyl-D-alanyl-D-alanine + UDP-N-acetyl-alpha-D-glucosamine = di-trans,octa-cis-undecaprenyl diphospho-[N-acetyl-alpha-D-glucosaminyl-(1-&gt;4)]-N-acetyl-alpha-D-muramoyl-L-alanyl-D-glutamyl-meso-2,6-diaminopimeloyl-D-alanyl-D-alanine + UDP + H(+). It participates in cell wall biogenesis; peptidoglycan biosynthesis. Cell wall formation. Catalyzes the transfer of a GlcNAc subunit on undecaprenyl-pyrophosphoryl-MurNAc-pentapeptide (lipid intermediate I) to form undecaprenyl-pyrophosphoryl-MurNAc-(pentapeptide)GlcNAc (lipid intermediate II). This chain is UDP-N-acetylglucosamine--N-acetylmuramyl-(pentapeptide) pyrophosphoryl-undecaprenol N-acetylglucosamine transferase, found in Listeria monocytogenes serovar 1/2a (strain ATCC BAA-679 / EGD-e).